The chain runs to 399 residues: RNA-binding protein cabeza (399 aa).

The segment covering M1–Q12 has biased composition (gly residues). A disordered region spans residues M1–G82. The segment covering Y24–Y34 has biased composition (polar residues). Positions K43–S69 are enriched in gly residues. Residues D120–R206 enclose the RRM domain. Disordered stretches follow at residues N209–D276 and T300–Y399. Residues K212–N271 are compositionally biased toward gly residues. The segment at R275–D304 adopts a RanBP2-type zinc-finger fold. Composition is skewed to gly residues over residues S308–Y339, N347–Y361, and N368–G380. The span at P387 to Y399 shows a compositional bias: low complexity.

The protein belongs to the RRM TET family. As to expression, ubiquitous. Enriched in the brain and central nervous system during embryogenesis. Enriched in the adult head. Embryos contain both isoforms A and B, whereas later in development (heads and torsos) only isoform B is detected.

It localises to the nucleus. Its function is as follows. May participate in a function common to the expression of most genes transcribed by RNA polymerase II. This chain is RNA-binding protein cabeza (caz), found in Drosophila melanogaster (Fruit fly).